The following is a 286-amino-acid chain: Probable syntaxin-7B (286 aa).

The Cytoplasmic portion of the chain corresponds to 1–257 (MTDRQPLISK…YVYKSSYRKK (257 aa)). Residues 97-107 (LSTSNKKESSH) are compositionally biased toward basic and acidic residues. A disordered region spans residues 97-160 (LSTSNKKESS…TNNNNNNNNN (64 aa)). Over residues 114-160 (QQQQQQQNNGNSNNNGYNTRGGYNQQQQQQQQQYNDYTNNNNNNNNN) the composition is skewed to low complexity. The t-SNARE coiled-coil homology domain maps to 185–247 (NRILDERNAN…EDAVVELEKA (63 aa)). The chain crosses the membrane as a helical; Anchor for type IV membrane protein span at residues 258-278 (MIIFVICLLVTLVAVGIFLAI). The Vesicular portion of the chain corresponds to 279 to 286 (YYGVIKKK).

Belongs to the syntaxin family.

It is found in the membrane. The sequence is that of Probable syntaxin-7B (syn7B) from Dictyostelium discoideum (Social amoeba).